The following is a 181-amino-acid chain: ATP-dependent protease subunit HslV (181 aa).

Residue Thr-2 is part of the active site. Positions 157, 160, and 163 each coordinate Na(+).

The protein belongs to the peptidase T1B family. HslV subfamily. As to quaternary structure, a double ring-shaped homohexamer of HslV is capped on each side by a ring-shaped HslU homohexamer. The assembly of the HslU/HslV complex is dependent on binding of ATP.

It is found in the cytoplasm. It catalyses the reaction ATP-dependent cleavage of peptide bonds with broad specificity.. With respect to regulation, allosterically activated by HslU binding. Its function is as follows. Protease subunit of a proteasome-like degradation complex believed to be a general protein degrading machinery. This is ATP-dependent protease subunit HslV from Hahella chejuensis (strain KCTC 2396).